Here is an 80-residue protein sequence, read N- to C-terminus: Large ribosomal subunit protein bL31B (80 aa).

This sequence belongs to the bacterial ribosomal protein bL31 family. Type B subfamily. In terms of assembly, part of the 50S ribosomal subunit.

In Oenococcus oeni (strain ATCC BAA-331 / PSU-1), this protein is Large ribosomal subunit protein bL31B.